The primary structure comprises 216 residues: Ribose-5-phosphate isomerase A (216 aa).

Substrate contacts are provided by residues 26-29, 79-82, and 92-95; these read TGST, DGAD, and KGGG. Glu-101 (proton acceptor) is an active-site residue. Lys-119 provides a ligand contact to substrate.

It belongs to the ribose 5-phosphate isomerase family. In terms of assembly, homodimer.

The catalysed reaction is aldehydo-D-ribose 5-phosphate = D-ribulose 5-phosphate. Its pathway is carbohydrate degradation; pentose phosphate pathway; D-ribose 5-phosphate from D-ribulose 5-phosphate (non-oxidative stage): step 1/1. Functionally, catalyzes the reversible conversion of ribose-5-phosphate to ribulose 5-phosphate. This chain is Ribose-5-phosphate isomerase A, found in Legionella pneumophila (strain Lens).